A 533-amino-acid polypeptide reads, in one-letter code: Beta-1,4 N-acetylgalactosaminyltransferase 1 (533 aa).

At 1–7 (MRLDRRA) the chain is on the cytoplasmic side. A helical; Signal-anchor for type II membrane protein transmembrane segment spans residues 8-25 (LYALVLLLACASLGLLYA). Residues 26-533 (STRDAPGLPN…KHRLQCMTAE (508 aa)) are Lumenal-facing. N-linked (GlcNAc...) asparagine glycans are attached at residues N79 and N274. A disulfide bond links C429 and C476.

The protein belongs to the glycosyltransferase 2 family. Homodimer; disulfide-linked. As to expression, strongly expressed in brain, testis, spleen, and to a lesser extent in liver.

The protein localises to the golgi apparatus membrane. It catalyses the reaction a ganglioside GM3 (d18:1(4E)) + UDP-N-acetyl-alpha-D-galactosamine = a ganglioside GM2 (d18:1(4E)) + UDP + H(+). The enzyme catalyses a ganglioside GD3 (d18:1(4E)) + UDP-N-acetyl-alpha-D-galactosamine = a ganglioside GD2 (d18:1(4E)) + UDP + H(+). It carries out the reaction a ganglioside GM3 + UDP-N-acetyl-alpha-D-galactosamine = a ganglioside GM2 + UDP + H(+). The catalysed reaction is a ganglioside GD3 + UDP-N-acetyl-alpha-D-galactosamine = a ganglioside GD2 + UDP + H(+). It catalyses the reaction a ganglioside GD1a + UDP-N-acetyl-alpha-D-galactosamine = a ganglioside GalNAc-GD1a + UDP + H(+). The enzyme catalyses a ganglioside GT3 (d18:1(4E)) + UDP-N-acetyl-alpha-D-galactosamine = a ganglioside GT2 (d18:1(4E)) + UDP + H(+). It carries out the reaction a beta-D-Gal-(1-&gt;4)-beta-D-Glc-(1&lt;-&gt;1)-Cer(d18:1(4E)) + UDP-N-acetyl-alpha-D-galactosamine = a ganglioside GA2 (d18:1(4E)) + UDP + H(+). The catalysed reaction is a neolactoside IV(3)-alpha-NeuGc-nLc4Cer + UDP-N-acetyl-alpha-D-galactosamine = a neolactoside IV(4)-beta-GalNAc-IV(3)-alpha-NeuGc-nLc4Cer + UDP + H(+). The protein operates within sphingolipid metabolism. Involved in the biosynthesis of gangliosides GM2, GD2, GT2 and GA2 from GM3, GD3, GT3 and GA3, respectively. The sequence is that of Beta-1,4 N-acetylgalactosaminyltransferase 1 from Rattus norvegicus (Rat).